The sequence spans 229 residues: Peptidase E (229 aa).

Active-site charge relay system residues include Ser120, Asp135, and His157.

The protein belongs to the peptidase S51 family.

The protein localises to the cytoplasm. It carries out the reaction Dipeptidase E catalyzes the hydrolysis of dipeptides Asp-|-Xaa. It does not act on peptides with N-terminal Glu, Asn or Gln, nor does it cleave isoaspartyl peptides.. In terms of biological role, hydrolyzes dipeptides containing N-terminal aspartate residues. May play a role in allowing the cell to use peptide aspartate to spare carbon otherwise required for the synthesis of the aspartate family of amino acids. The polypeptide is Peptidase E (Citrobacter koseri (strain ATCC BAA-895 / CDC 4225-83 / SGSC4696)).